We begin with the raw amino-acid sequence, 396 residues long: Cytochrome P450 121 (396 aa).

Residue Cys-345 participates in heme binding.

It belongs to the cytochrome P450 family. Requires heme as cofactor.

Its subcellular location is the cytoplasm. In Mycobacterium bovis (strain ATCC BAA-935 / AF2122/97), this protein is Cytochrome P450 121 (cyp121).